The primary structure comprises 498 residues: Polygalacturonan/rhamnogalacturonan-binding protein YtcQ (498 aa).

Positions 1 to 22 (MGNKWRVLLIVLVLALGGVLAG) are cleaved as a signal peptide. The N-palmitoyl cysteine moiety is linked to residue Cys23. Residue Cys23 is the site of S-diacylglycerol cysteine attachment.

Belongs to the bacterial solute-binding protein 1 family. In terms of assembly, the complex is probably composed of two ATP-binding proteins (MsmX), two transmembrane proteins (YtcP and YteP) and a solute-binding protein (YtcQ).

The protein resides in the cell membrane. Its function is as follows. Involved in pectin degradation. Part of the ABC transporter complex YtcQP-YteP involved in the uptake of polygalacturonan and rhamnogalacturonan type I. The sequence is that of Polygalacturonan/rhamnogalacturonan-binding protein YtcQ (ytcQ) from Bacillus subtilis (strain 168).